The chain runs to 387 residues: Cysteine desulfurase IscS (387 aa).

Pyridoxal 5'-phosphate is bound by residues 73–74 (AT), asparagine 155, glutamine 183, and 203–205 (SAH). Residue lysine 206 is modified to N6-(pyridoxal phosphate)lysine. Threonine 241 provides a ligand contact to pyridoxal 5'-phosphate. The active-site Cysteine persulfide intermediate is the cysteine 328. [2Fe-2S] cluster is bound at residue cysteine 328.

Belongs to the class-V pyridoxal-phosphate-dependent aminotransferase family. NifS/IscS subfamily. Homodimer. Forms a heterotetramer with IscU, interacts with other sulfur acceptors. The cofactor is pyridoxal 5'-phosphate.

The protein resides in the cytoplasm. The catalysed reaction is (sulfur carrier)-H + L-cysteine = (sulfur carrier)-SH + L-alanine. Its pathway is cofactor biosynthesis; iron-sulfur cluster biosynthesis. Functionally, master enzyme that delivers sulfur to a number of partners involved in Fe-S cluster assembly, tRNA modification or cofactor biosynthesis. Catalyzes the removal of elemental sulfur atoms from cysteine to produce alanine. Functions as a sulfur delivery protein for Fe-S cluster synthesis onto IscU, an Fe-S scaffold assembly protein, as well as other S acceptor proteins. In Helicobacter pylori (strain ATCC 700392 / 26695) (Campylobacter pylori), this protein is Cysteine desulfurase IscS.